The sequence spans 124 residues: Phycocyanin PC645 alpha-3 subunit (124 aa).

Arginine 71 lines the (2R,3E)-phycocyanobilin pocket. Mesobiliverdin is bound by residues cysteine 73, tyrosine 81, and lysine 97.

Belongs to the phycoerythrin family. In terms of assembly, heterotetramer of 2 different alpha chains and 2 identical beta chains which form 2 alpha-beta heterodimers within the heterotetramer. Contains one phycocyanobilin chromophore and one mesobiliverdin chromophore with binding mediated by both the alpha and beta subunits.

The protein localises to the plastid. It localises to the chloroplast thylakoid membrane. Light-harvesting photosynthetic tetrapyrrole chromophore-protein from the phycobiliprotein complex. The chain is Phycocyanin PC645 alpha-3 subunit from Chroomonas sp. (strain CCMP270).